An 82-amino-acid polypeptide reads, in one-letter code: Polyferredoxin protein FwdG (82 aa).

4Fe-4S ferredoxin-type domains are found at residues Tyr-4–Trp-33 and Val-51–Lys-80. The [4Fe-4S] cluster site is built by Cys-13, Cys-16, Cys-19, Cys-23, Cys-60, Cys-63, Cys-66, and Cys-70.

Requires [4Fe-4S] cluster as cofactor.

The polypeptide is Polyferredoxin protein FwdG (fwdG) (Methanocaldococcus jannaschii (strain ATCC 43067 / DSM 2661 / JAL-1 / JCM 10045 / NBRC 100440) (Methanococcus jannaschii)).